Here is a 159-residue protein sequence, read N- to C-terminus: Keratin-associated protein 6-2 (159 aa).

The interval Gly-11–Tyr-147 is 66 X 2 AA repeats of G-[YCGS].

This sequence belongs to the KRTAP type 6 family. Interacts with hair keratins. Expressed in skin during two hair growth cycles. Expression restricted to the cortical cells of hair follicles, appearing first in the cortical cells processing the flat nuclei located a few cells above the dermal papilla.

Functionally, in the hair cortex, hair keratin intermediate filaments are embedded in an interfilamentous matrix, consisting of hair keratin-associated proteins (KRTAP), which are essential for the formation of a rigid and resistant hair shaft through their extensive disulfide bond cross-linking with abundant cysteine residues of hair keratins. The matrix proteins include the high-sulfur and high-glycine-tyrosine keratins. This chain is Keratin-associated protein 6-2, found in Mus musculus (Mouse).